A 524-amino-acid chain; its full sequence is Sterol O-acyltransferase 2 (524 aa).

The tract at residues 1 to 31 is disordered; that stretch reads MEPKAPQLRRRERQGEEQENGACGEGNTRTH. Residues 1–118 lie on the Cytoplasmic side of the membrane; it reads MEPKAPQLRR…LDELMGVQHF (118 aa). Histidine 117 contributes to the cholesterol binding site. A helical transmembrane segment spans residues 119–140; sequence RTIYHMFIAGLCVLIISTLAID. The Lumenal portion of the chain corresponds to 141–160; that stretch reads FIDEGRLMLEFDLLLFSFGQ. Residues 161 to 186 form a helical membrane-spanning segment; the sequence is LPLALMMWVPMFLSTLLLPYQTLRLW. The Cytoplasmic segment spans residues 187 to 198; that stretch reads ARPRSGGAWTLG. A helical membrane pass occupies residues 199–222; sequence ASLGCVLLAAHAAVLCVLPVHVSV. Over 223–230 the chain is Lumenal; sequence KHELPPAS. A helical transmembrane segment spans residues 231–254; sequence RCVLVFEQVRFLMKSYSFLRETVP. The Cytoplasmic segment spans residues 255-295; that stretch reads GIFCVRGGKGICTPSFSSYLYFLFCPTLIYRETYPRTPSIR. At cysteine 279 the chain carries Cysteine sulfenic acid (-SOH); alternate. A Glycyl cysteine thioester (Cys-Gly) (interchain with G-Cter in ubiquitin); alternate cross-link involves residue cysteine 279. The helical transmembrane segment at 296–328 threads the bilayer; it reads WNYVAKNFAQALGCLLYACFILGRLCVPVFANM. At 329 to 345 the chain is on the lumenal side; it reads SREPFSTRALLLSILHA. Residues 346–371 traverse the membrane as a helical segment; it reads TGPGIFMLLLIFFAFLHCWLNAFAEM. At 372–419 the chain is on the cytoplasmic side; sequence LRFGDRMFYRDWWNSTSFSNYYRTWNVVVHDWLYSYVYQDGLWLLGRQ. An FYXDWWN motif motif is present at residues 379 to 385; the sequence is FYRDWWN. An acyl-CoA-binding residues include asparagine 391, arginine 394, asparagine 397, histidine 401, tyrosine 409, and serine 432. The chain crosses the membrane as a helical span at residues 420–444; that stretch reads GRGAAMLGVFLVSALVHEYIFCFVL. The active site involves histidine 436. The Lumenal segment spans residues 445 to 450; sequence GFFYPV. The helical transmembrane segment at 451-466 threads the bilayer; the sequence is MLILFLVVGGLLNFTM. At 467–472 the chain is on the cytoplasmic side; it reads NDRHTG. A helical transmembrane segment spans residues 473–504; the sequence is PAWNILMWTFLFLGQGIQVSLYCQEWYARRHC. Topologically, residues 505–524 are lumenal; it reads PLPQPTFWELVTPRSWSCHP.

The protein belongs to the membrane-bound acyltransferase family. Sterol o-acyltransferase subfamily. As to quaternary structure, may form homo- or heterodimers. Interacts with INSIG1; the interaction is direct and promotes association with AMFR/gp78. In terms of processing, polyubiquitinated by AMFR/gp78 at Cys-279, leading to its degradation when the lipid levels are low. Association with AMFR/gp78 is mediated via interaction with INSIG1. High concentration of cholesterol and fatty acid results in Cys-279 oxidation, preventing ubiquitination at the same site, resulting in protein stabilization. Post-translationally, oxidized at Cys-279: high concentration of cholesterol and fatty acid induce reactive oxygen species, which oxidizes Cys-279, preventing ubiquitination at the same site, and resulting in protein stabilization.

The protein resides in the endoplasmic reticulum membrane. The catalysed reaction is a sterol + a long-chain fatty acyl-CoA = a long-chain 3-hydroxysterol ester + CoA. The enzyme catalyses cholesterol + an acyl-CoA = a cholesterol ester + CoA. It catalyses the reaction cholesterol + (9Z)-octadecenoyl-CoA = cholesteryl (9Z-octadecenoate) + CoA. It carries out the reaction (5Z,8Z,11Z,14Z,17Z)-eicosapentaenoyl-CoA + cholesterol = (5Z,8Z,11Z,14Z,17Z-eicosapentaenoyl)-cholesterol + CoA. The catalysed reaction is (9Z,12Z,15Z)-octadecatrienoyl-CoA + cholesterol = (9Z,12Z,15Z-octadecatrienoyl)-cholesterol + CoA. The enzyme catalyses (5Z,8Z,11Z,14Z)-eicosatetraenoyl-CoA + cholesterol = cholesteryl (5Z,8Z,11Z,14Z)-eicosatetraenoate + CoA. Its function is as follows. Catalyzes the formation of fatty acid-cholesterol esters, which are less soluble in membranes than cholesterol. Plays a role in lipoprotein assembly and dietary cholesterol absorption. Utilizes oleoyl-CoA ((9Z)-octadecenoyl-CoA) and linolenoyl-CoA ((9Z,12Z,15Z)-octadecatrienoyl-CoA) as substrates. May provide cholesteryl esters for lipoprotein secretion from hepatocytes and intestinal mucosa. This chain is Sterol O-acyltransferase 2, found in Rattus norvegicus (Rat).